A 166-amino-acid polypeptide reads, in one-letter code: Cytochrome c-type biogenesis protein CcmE (166 aa).

Over Met-1–Lys-8 the chain is Cytoplasmic. A helical; Signal-anchor for type II membrane protein transmembrane segment spans residues Leu-9–Ala-29. The Periplasmic segment spans residues Ile-30–Gln-166. Heme contacts are provided by His-124 and Tyr-128. The tract at residues Val-133–Gln-166 is disordered. Positions Arg-142 to Tyr-152 are enriched in polar residues. Positions Glu-156–Gln-166 are enriched in basic and acidic residues.

This sequence belongs to the CcmE/CycJ family.

It localises to the cell inner membrane. Heme chaperone required for the biogenesis of c-type cytochromes. Transiently binds heme delivered by CcmC and transfers the heme to apo-cytochromes in a process facilitated by CcmF and CcmH. The polypeptide is Cytochrome c-type biogenesis protein CcmE (Psychrobacter arcticus (strain DSM 17307 / VKM B-2377 / 273-4)).